Consider the following 183-residue polypeptide: Probable cobalt-precorrin-6B C(15)-methyltransferase (decarboxylating) (183 aa).

S-adenosyl-L-methionine contacts are provided by residues Thr-19, 43 to 47 (GCGSG), Asp-64, and Ala-92.

It belongs to the methyltransferase superfamily. Archaeal-type CbiT family.

The catalysed reaction is Co-precorrin-6B + S-adenosyl-L-methionine = Co-precorrin-7 + S-adenosyl-L-homocysteine + CO2. It functions in the pathway cofactor biosynthesis; adenosylcobalamin biosynthesis; cob(II)yrinate a,c-diamide from sirohydrochlorin (anaerobic route): step 8/10. Its function is as follows. Catalyzes the methylation of C-15 in cobalt-precorrin-6B followed by the decarboxylation of C-12 to form cobalt-precorrin-7. This chain is Probable cobalt-precorrin-6B C(15)-methyltransferase (decarboxylating), found in Methanocaldococcus jannaschii (strain ATCC 43067 / DSM 2661 / JAL-1 / JCM 10045 / NBRC 100440) (Methanococcus jannaschii).